A 132-amino-acid polypeptide reads, in one-letter code: Small ribosomal subunit protein uS8 (132 aa).

Belongs to the universal ribosomal protein uS8 family. As to quaternary structure, part of the 30S ribosomal subunit. Contacts proteins S5 and S12.

Its function is as follows. One of the primary rRNA binding proteins, it binds directly to 16S rRNA central domain where it helps coordinate assembly of the platform of the 30S subunit. The polypeptide is Small ribosomal subunit protein uS8 (Lacticaseibacillus casei (strain BL23) (Lactobacillus casei)).